The sequence spans 314 residues: Porphobilinogen deaminase (314 aa).

Cys249 carries the S-(dipyrrolylmethanemethyl)cysteine modification.

This sequence belongs to the HMBS family. In terms of assembly, monomer. Dipyrromethane serves as cofactor.

The enzyme catalyses 4 porphobilinogen + H2O = hydroxymethylbilane + 4 NH4(+). Its pathway is porphyrin-containing compound metabolism; protoporphyrin-IX biosynthesis; coproporphyrinogen-III from 5-aminolevulinate: step 2/4. Tetrapolymerization of the monopyrrole PBG into the hydroxymethylbilane pre-uroporphyrinogen in several discrete steps. This Brucella anthropi (strain ATCC 49188 / DSM 6882 / CCUG 24695 / JCM 21032 / LMG 3331 / NBRC 15819 / NCTC 12168 / Alc 37) (Ochrobactrum anthropi) protein is Porphobilinogen deaminase.